The primary structure comprises 343 residues: N-acetyl-gamma-glutamyl-phosphate reductase (343 aa).

The active site involves Cys-149.

This sequence belongs to the NAGSA dehydrogenase family. Type 1 subfamily.

It is found in the cytoplasm. It carries out the reaction N-acetyl-L-glutamate 5-semialdehyde + phosphate + NADP(+) = N-acetyl-L-glutamyl 5-phosphate + NADPH + H(+). The protein operates within amino-acid biosynthesis; L-arginine biosynthesis; N(2)-acetyl-L-ornithine from L-glutamate: step 3/4. Catalyzes the NADPH-dependent reduction of N-acetyl-5-glutamyl phosphate to yield N-acetyl-L-glutamate 5-semialdehyde. The chain is N-acetyl-gamma-glutamyl-phosphate reductase from Methanococcus maripaludis (strain C7 / ATCC BAA-1331).